The following is a 769-amino-acid chain: Endonuclease MutS2 (769 aa).

Glycine 335–threonine 342 serves as a coordination point for ATP. Residues isoleucine 694 to valine 769 enclose the Smr domain.

The protein belongs to the DNA mismatch repair MutS family. MutS2 subfamily. Homodimer. Binds to stalled ribosomes, contacting rRNA.

In terms of biological role, endonuclease that is involved in the suppression of homologous recombination and thus may have a key role in the control of bacterial genetic diversity. Acts as a ribosome collision sensor, splitting the ribosome into its 2 subunits. Detects stalled/collided 70S ribosomes which it binds and splits by an ATP-hydrolysis driven conformational change. Acts upstream of the ribosome quality control system (RQC), a ribosome-associated complex that mediates the extraction of incompletely synthesized nascent chains from stalled ribosomes and their subsequent degradation. Probably generates substrates for RQC. This is Endonuclease MutS2 from Maridesulfovibrio salexigens (strain ATCC 14822 / DSM 2638 / NCIMB 8403 / VKM B-1763) (Desulfovibrio salexigens).